We begin with the raw amino-acid sequence, 247 residues long: uncharacterized protein (247 aa).

This is an uncharacterized protein from Schizosaccharomyces pombe (strain 972 / ATCC 24843) (Fission yeast).